The following is a 367-amino-acid chain: uncharacterized protein (367 aa).

It belongs to the mimivirus L17x/L18x family.

This is an uncharacterized protein from Acanthamoeba polyphaga mimivirus (APMV).